We begin with the raw amino-acid sequence, 230 residues long: Secretory carrier-associated membrane protein 4 (230 aa).

Topologically, residues 1–39 (MAGKENNFPPLPHFLPLKPCFYQDFSDEIPVEHQVLVKR) are cytoplasmic. 4 consecutive transmembrane segments (helical) span residues 40–60 (IYRL…ACLA), 61–81 (WWIA…LVLF), 106–126 (MAFF…AIGF), and 149–169 (VVML…AITI). The Cytoplasmic segment spans residues 170-230 (VKVHRIYRGA…SYSTSGSQWP (61 aa)). At threonine 194 the chain carries Phosphothreonine. Residues 197–230 (NPPSREAQFNSFSGNSLPEYPTVPSYSTSGSQWP) form a disordered region. 2 stretches are compositionally biased toward polar residues: residues 203–212 (AQFNSFSGNS) and 220–230 (PSYSTSGSQWP).

It belongs to the SCAMP family.

It is found in the membrane. In terms of biological role, probably involved in membrane protein trafficking. This chain is Secretory carrier-associated membrane protein 4 (Scamp4), found in Rattus norvegicus (Rat).